A 240-amino-acid chain; its full sequence is Protein MGARP (240 aa).

Residues 1–40 are Cytoplasmic-facing; it reads MYLRRAVSKTLALPLRAPPNPAPLGKDASLRRMSSNRFPG. Residues 41-63 traverse the membrane as a helical; Anchor for type IV membrane protein segment; that stretch reads SSGSNMIYYLVVGVTVSAGGYYA. Over 64–240 the chain is Mitochondrial intermembrane; the sequence is YKTVTSDQAK…VGSEAASAQG (177 aa). A disordered region spans residues 166 to 240; sequence RETTEVNPET…VGSEAASAQG (75 aa). Low complexity predominate over residues 170 to 181; sequence EVNPETTPEVTN. Residues 191–201 are compositionally biased toward basic and acidic residues; sequence DNDKDTTKNET. The segment covering 202-213 has biased composition (acidic residues); that stretch reads SDEYAELEEENS. The span at 228 to 240 shows a compositional bias: low complexity; the sequence is EASVGSEAASAQG.

In terms of assembly, interacts with RHOT1/Miro-1, TRAK1/OIP106 and TRAK2/GRIF1. Interacts with RHOT2/Miro-2. In terms of tissue distribution, expressed in the brain, adrenal gland and corneal endothelium (CE). Expressed in steroid-producing cells of the ovary and testis (at protein level). Expressed in steroid-producing cells of the ovary and testis. Weakly expressed in placenta. Expressed in corneal endothelial cells.

It localises to the mitochondrion. It is found in the mitochondrion outer membrane. Its subcellular location is the mitochondrion inner membrane. Functionally, plays a role in the trafficking of mitochondria along microtubules. Regulates the kinesin-mediated axonal transport of mitochondria to nerve terminals along microtubules during hypoxia. Participates in the translocation of TRAK2/GRIF1 from the cytoplasm to the mitochondrion. Also plays a role in steroidogenesis through maintenance of mitochondrial abundance and morphology. Plays an inhibitory role during neocortex development by regulating mitochondrial morphology, distribution and motility in neocortical neurons. This Homo sapiens (Human) protein is Protein MGARP (MGARP).